Reading from the N-terminus, the 89-residue chain is Teretoxin Tan6.8 (89 aa).

Positions 1–21 are cleaved as a signal peptide; it reads MRLLLILLLLTPVILAGSLDE. The tract at residues 22-42 is disordered; that stretch reads EPNNADGANAASFTADQEGRH. Residues 22–44 constitute a propeptide that is removed on maturation; it reads EPNNADGANAASFTADQEGRHKR.

Contains 3 disulfide bonds. In terms of tissue distribution, expressed by the venom duct.

The protein localises to the secreted. The protein is Teretoxin Tan6.8 of Terebra anilis (Auger snail).